The primary structure comprises 212 residues: 3-demethoxyubiquinol 3-hydroxylase (212 aa).

A compositionally biased stretch (low complexity) spans 1-14 (MTSPSSRTPRGSTP). Positions 1 to 22 (MTSPSSRTPRGSTPPFEPSADE) are disordered. Fe cation is bound by residues Glu-58, Glu-89, His-92, Glu-141, Glu-173, and His-176.

The protein belongs to the COQ7 family. Requires Fe cation as cofactor.

It is found in the cell membrane. The catalysed reaction is a 5-methoxy-2-methyl-3-(all-trans-polyprenyl)benzene-1,4-diol + AH2 + O2 = a 3-demethylubiquinol + A + H2O. The protein operates within cofactor biosynthesis; ubiquinone biosynthesis. Catalyzes the hydroxylation of 2-nonaprenyl-3-methyl-6-methoxy-1,4-benzoquinol during ubiquinone biosynthesis. In Rhodospirillum rubrum (strain ATCC 11170 / ATH 1.1.1 / DSM 467 / LMG 4362 / NCIMB 8255 / S1), this protein is 3-demethoxyubiquinol 3-hydroxylase.